The chain runs to 103 residues: Pyrimidine/purine nucleoside phosphorylase (103 aa).

The protein belongs to the nucleoside phosphorylase PpnP family.

The enzyme catalyses a purine D-ribonucleoside + phosphate = a purine nucleobase + alpha-D-ribose 1-phosphate. It carries out the reaction adenosine + phosphate = alpha-D-ribose 1-phosphate + adenine. The catalysed reaction is cytidine + phosphate = cytosine + alpha-D-ribose 1-phosphate. It catalyses the reaction guanosine + phosphate = alpha-D-ribose 1-phosphate + guanine. The enzyme catalyses inosine + phosphate = alpha-D-ribose 1-phosphate + hypoxanthine. It carries out the reaction thymidine + phosphate = 2-deoxy-alpha-D-ribose 1-phosphate + thymine. The catalysed reaction is uridine + phosphate = alpha-D-ribose 1-phosphate + uracil. It catalyses the reaction xanthosine + phosphate = alpha-D-ribose 1-phosphate + xanthine. In terms of biological role, catalyzes the phosphorolysis of diverse nucleosides, yielding D-ribose 1-phosphate and the respective free bases. Can use uridine, adenosine, guanosine, cytidine, thymidine, inosine and xanthosine as substrates. Also catalyzes the reverse reactions. The sequence is that of Pyrimidine/purine nucleoside phosphorylase from Sulfurimonas denitrificans (strain ATCC 33889 / DSM 1251) (Thiomicrospira denitrificans (strain ATCC 33889 / DSM 1251)).